A 109-amino-acid polypeptide reads, in one-letter code: Class I hydrophobin 7 (109 aa).

An N-terminal signal peptide occupies residues 1-17; the sequence is MFAQSFIITALAALAVA. Intrachain disulfides connect cysteine 28/cysteine 88, cysteine 35/cysteine 82, cysteine 36/cysteine 69, and cysteine 89/cysteine 102.

This sequence belongs to the fungal hydrophobin family. In terms of assembly, self-assembles to form functional amyloid fibrils called rodlets. Self-assembly into fibrillar rodlets occurs spontaneously at hydrophobic:hydrophilic interfaces and the rodlets further associate laterally to form amphipathic monolayers.

It localises to the secreted. Its subcellular location is the cell wall. Aerial growth, conidiation, and dispersal of filamentous fungi in the environment rely upon a capability of their secreting small amphipathic proteins called hydrophobins (HPBs) with low sequence identity. Class I can self-assemble into an outermost layer of rodlet bundles on aerial cell surfaces, conferring cellular hydrophobicity that supports fungal growth, development and dispersal; whereas Class II form highly ordered films at water-air interfaces through intermolecular interactions but contribute nothing to the rodlet structure. Hydph7 is a class I hydrophobin involved in fruiting body development. In Pleurotus ostreatus (strain PC15) (Oyster mushroom), this protein is Class I hydrophobin 7.